Reading from the N-terminus, the 219-residue chain is Oligoribonuclease (219 aa).

An Exonuclease domain is found at 19-184; the sequence is LVWVDLEMTG…ADIVESIREL (166 aa). Tyr-141 is a catalytic residue.

This sequence belongs to the oligoribonuclease family.

Its subcellular location is the cytoplasm. 3'-to-5' exoribonuclease specific for small oligoribonucleotides. The protein is Oligoribonuclease of Corynebacterium glutamicum (strain R).